Reading from the N-terminus, the 636-residue chain is Eukaryotic peptide chain release factor GTP-binding subunit ERF3A (636 aa).

Composition is skewed to gly residues over residues 1 to 16 (MDPS…GGGS) and 103 to 116 (AAGG…GAGG). 2 disordered regions span residues 1-54 (MDPS…AAVA) and 90-206 (LRGP…PPGA). Residues 121–138 (VESSQDQSCEGSNSTVSM) show a composition bias toward polar residues. A compositionally biased stretch (acidic residues) spans 183–193 (STQEMMEEEEE). A tr-type G domain is found at 209 to 435 (KEHVNVVFIG…DNLPNFNRSV (227 aa)). The G1 stretch occupies residues 218-225 (GHVDAGKS). 221–226 (DAGKST) contributes to the GTP binding site. Residues 274-278 (GKTVE) are G2. Residues 295–298 (DAPG) form a G3 region. Residues 357–360 (NKMD) and 399–401 (SGL) each bind GTP. Residues 357-360 (NKMD) form a G4 region. The segment at 399–401 (SGL) is G5.

Belongs to the TRAFAC class translation factor GTPase superfamily. Classic translation factor GTPase family. ERF3 subfamily. In terms of assembly, component of the eRF1-eRF3-GTP ternary complex, composed of ETF1/ERF1 and ERF3 (GSPT1/ERF3A or GSPT2/ERF3B) and GTP. Component of the transient SURF (SMG1-UPF1-eRF1-eRF3) complex. The ETF1-GSPT1 complex interacts with JMJD4. Interacts with PABPC1. Interacts with SHFL.

It carries out the reaction GTP + H2O = GDP + phosphate + H(+). Functionally, GTPase component of the eRF1-eRF3-GTP ternary complex, a ternary complex that mediates translation termination in response to the termination codons UAA, UAG and UGA. GSPT1/ERF3A mediates ETF1/ERF1 delivery to stop codons: The eRF1-eRF3-GTP complex binds to a stop codon in the ribosomal A-site. GTP hydrolysis by GSPT1/ERF3A induces a conformational change that leads to its dissociation, permitting ETF1/ERF1 to accommodate fully in the A-site. Component of the transient SURF complex which recruits UPF1 to stalled ribosomes in the context of nonsense-mediated decay (NMD) of mRNAs containing premature stop codons. Required for SHFL-mediated translation termination which inhibits programmed ribosomal frameshifting (-1PRF) of mRNA from viruses and cellular genes. The chain is Eukaryotic peptide chain release factor GTP-binding subunit ERF3A (Gspt1) from Mus musculus (Mouse).